A 617-amino-acid chain; its full sequence is Electron transfer flavoprotein-ubiquinone oxidoreductase, mitochondrial (617 aa).

A mitochondrion-targeting transit peptide spans M1–W33. Residue G75–G80 participates in FAD binding. K96 bears the N6-acetyllysine mark. An intramembrane segment occupies I109–D130. N6-acetyllysine occurs at positions 132 and 223. G305 and G306 together coordinate a ubiquinone. N6-acetyllysine is present on K357. Residues I428–E447 lie within the membrane without spanning it. Position 551 is a phosphoserine (S551). Residues C561, C586, C589, and C592 each coordinate [4Fe-4S] cluster. One can recognise a 4Fe-4S ferredoxin-type domain in the interval F577–P606.

As to quaternary structure, monomer. Requires [4Fe-4S] cluster as cofactor. FAD is required as a cofactor.

It localises to the mitochondrion inner membrane. The enzyme catalyses a ubiquinone + reduced [electron-transfer flavoprotein] = a ubiquinol + oxidized [electron-transfer flavoprotein] + H(+). Accepts electrons from ETF and reduces ubiquinone. The chain is Electron transfer flavoprotein-ubiquinone oxidoreductase, mitochondrial (ETFDH) from Sus scrofa (Pig).